Here is a 70-residue protein sequence, read N- to C-terminus: SPbeta prophage-derived uncharacterized protein YotJ (70 aa).

This chain is SPbeta prophage-derived uncharacterized protein YotJ (yotJ), found in Bacillus subtilis (strain 168).